We begin with the raw amino-acid sequence, 430 residues long: Adenylosuccinate synthetase (430 aa).

GTP is bound by residues 12 to 18 (GDEGKGK) and 40 to 42 (GHT). Catalysis depends on D13, which acts as the Proton acceptor. The Mg(2+) site is built by D13 and G40. Residues 13–16 (DEGK), 38–41 (NAGH), T128, R142, Q223, T238, and R302 contribute to the IMP site. H41 (proton donor) is an active-site residue. A substrate-binding site is contributed by 298–304 (TTTGRPR). Residues R304, 330 to 332 (LLD), and 412 to 414 (SVG) contribute to the GTP site.

The protein belongs to the adenylosuccinate synthetase family. As to quaternary structure, homodimer. Requires Mg(2+) as cofactor.

The protein resides in the cytoplasm. The enzyme catalyses IMP + L-aspartate + GTP = N(6)-(1,2-dicarboxyethyl)-AMP + GDP + phosphate + 2 H(+). The protein operates within purine metabolism; AMP biosynthesis via de novo pathway; AMP from IMP: step 1/2. Plays an important role in the de novo pathway of purine nucleotide biosynthesis. Catalyzes the first committed step in the biosynthesis of AMP from IMP. The polypeptide is Adenylosuccinate synthetase (Listeria monocytogenes serotype 4a (strain HCC23)).